The sequence spans 557 residues: Potassium-transporting ATPase potassium-binding subunit (557 aa).

Transmembrane regions (helical) follow at residues glycine 5–serine 25, leucine 63–glycine 83, glycine 132–isoleucine 152, leucine 170–isoleucine 190, phenylalanine 253–valine 273, leucine 283–valine 303, valine 329–alanine 349, alanine 356–valine 376, glycine 379–glycine 399, leucine 416–methionine 436, leucine 484–alanine 504, and leucine 526–alanine 546.

It belongs to the KdpA family. In terms of assembly, the system is composed of three essential subunits: KdpA, KdpB and KdpC.

The protein resides in the cell inner membrane. Its function is as follows. Part of the high-affinity ATP-driven potassium transport (or Kdp) system, which catalyzes the hydrolysis of ATP coupled with the electrogenic transport of potassium into the cytoplasm. This subunit binds the periplasmic potassium ions and delivers the ions to the membrane domain of KdpB through an intramembrane tunnel. This is Potassium-transporting ATPase potassium-binding subunit from Shigella boydii serotype 4 (strain Sb227).